Consider the following 417-residue polypeptide: Gamma-glutamyl phosphate reductase (417 aa).

Belongs to the gamma-glutamyl phosphate reductase family.

Its subcellular location is the cytoplasm. The catalysed reaction is L-glutamate 5-semialdehyde + phosphate + NADP(+) = L-glutamyl 5-phosphate + NADPH + H(+). It functions in the pathway amino-acid biosynthesis; L-proline biosynthesis; L-glutamate 5-semialdehyde from L-glutamate: step 2/2. Functionally, catalyzes the NADPH-dependent reduction of L-glutamate 5-phosphate into L-glutamate 5-semialdehyde and phosphate. The product spontaneously undergoes cyclization to form 1-pyrroline-5-carboxylate. This Desulfitobacterium hafniense (strain DSM 10664 / DCB-2) protein is Gamma-glutamyl phosphate reductase.